The following is a 908-amino-acid chain: Alanine--tRNA ligase (908 aa).

Positions 596, 600, 698, and 702 each coordinate Zn(2+).

The protein belongs to the class-II aminoacyl-tRNA synthetase family. The cofactor is Zn(2+).

The protein resides in the cytoplasm. It catalyses the reaction tRNA(Ala) + L-alanine + ATP = L-alanyl-tRNA(Ala) + AMP + diphosphate. Its function is as follows. Catalyzes the attachment of alanine to tRNA(Ala) in a two-step reaction: alanine is first activated by ATP to form Ala-AMP and then transferred to the acceptor end of tRNA(Ala). Also edits incorrectly charged Ser-tRNA(Ala) and Gly-tRNA(Ala) via its editing domain. In Lysinibacillus sphaericus (strain C3-41), this protein is Alanine--tRNA ligase.